A 154-amino-acid polypeptide reads, in one-letter code: Large-conductance mechanosensitive channel (154 aa).

3 consecutive transmembrane segments (helical) span residues 16 to 36 (VLGL…ISSV), 39 to 59 (DLLM…GFFI), and 89 to 109 (GQFL…FMIM).

The protein belongs to the MscL family. In terms of assembly, homopentamer.

It localises to the cell inner membrane. In terms of biological role, channel that opens in response to stretch forces in the membrane lipid bilayer. May participate in the regulation of osmotic pressure changes within the cell. The chain is Large-conductance mechanosensitive channel from Zymomonas mobilis subsp. mobilis (strain ATCC 31821 / ZM4 / CP4).